Consider the following 176-residue polypeptide: Nucleoside triphosphate/diphosphate phosphatase (176 aa).

Residue Arg-23 is the Proton donor of the active site. Mg(2+)-binding residues include Asn-87, Asp-103, Asp-105, Asp-107, Asp-120, and Glu-123.

The protein belongs to the Ntdp family. The cofactor is Mg(2+).

It catalyses the reaction a ribonucleoside 5'-triphosphate + H2O = a ribonucleoside 5'-diphosphate + phosphate + H(+). The catalysed reaction is a ribonucleoside 5'-diphosphate + H2O = a ribonucleoside 5'-phosphate + phosphate + H(+). In terms of biological role, has nucleoside phosphatase activity towards nucleoside triphosphates and nucleoside diphosphates. The protein is Nucleoside triphosphate/diphosphate phosphatase (ygaC) of Bacillus subtilis (strain 168).